A 446-amino-acid polypeptide reads, in one-letter code: Putative ankyrin repeat protein L273 (446 aa).

ANK repeat units follow at residues asparagine 71–methionine 100, aspartate 124–proline 153, threonine 206–methionine 237, valine 245–valine 277, glutamate 303–tyrosine 332, and tyrosine 365–isoleucine 394.

This chain is Putative ankyrin repeat protein L273, found in Acanthamoeba polyphaga (Amoeba).